The following is a 467-amino-acid chain: Cysteine--tRNA ligase (467 aa).

Residue Cys-28 participates in Zn(2+) binding. The 'HIGH' region motif lies at 30-40; that stretch reads ITAYDYSHIGH. Positions 211, 236, and 240 each coordinate Zn(2+). The short motif at 268 to 272 is the 'KMSKS' region element; sequence KMSKS. Lys-271 contributes to the ATP binding site.

This sequence belongs to the class-I aminoacyl-tRNA synthetase family. Zn(2+) is required as a cofactor.

The protein localises to the cytoplasm. It carries out the reaction tRNA(Cys) + L-cysteine + ATP = L-cysteinyl-tRNA(Cys) + AMP + diphosphate. The protein is Cysteine--tRNA ligase (cysS) of Archaeoglobus fulgidus (strain ATCC 49558 / DSM 4304 / JCM 9628 / NBRC 100126 / VC-16).